Reading from the N-terminus, the 161-residue chain is Large ribosomal subunit protein eL21 (161 aa).

This sequence belongs to the eukaryotic ribosomal protein eL21 family.

The polypeptide is Large ribosomal subunit protein eL21 (rpl-21) (Caenorhabditis elegans).